The sequence spans 105 residues: MRIKKGDLVEVISGKDKGKRGKVLRVIPKENKVIVENVNMVKRHQRPVPQLREGGIIEREAPIYASKVMVVCPACDKRTRVGYRFTEDGKKVRYCKKCGEIIDKD.

It belongs to the universal ribosomal protein uL24 family. In terms of assembly, part of the 50S ribosomal subunit.

In terms of biological role, one of two assembly initiator proteins, it binds directly to the 5'-end of the 23S rRNA, where it nucleates assembly of the 50S subunit. One of the proteins that surrounds the polypeptide exit tunnel on the outside of the subunit. The chain is Large ribosomal subunit protein uL24 from Thermotoga maritima (strain ATCC 43589 / DSM 3109 / JCM 10099 / NBRC 100826 / MSB8).